The following is a 289-amino-acid chain: MYG1 protein TC_0665 (289 aa).

Belongs to the MYG1 family.

In Chlamydia muridarum (strain MoPn / Nigg), this protein is MYG1 protein TC_0665.